The primary structure comprises 733 residues: Non-secreted LysM effector LCP1 (733 aa).

Residues 1 to 22 (MMRRPWLLSALVAWVKLPSVQG) form the signal peptide. LysM domains follow at residues 211-256 (SEYT…KLCI) and 261-309 (DVYV…TICI). N298, N304, N340, N350, N381, N432, N442, N455, and N538 each carry an N-linked (GlcNAc...) asparagine glycan. The LysM 3 domain maps to 347 to 393 (LFHNVTAGDDCGTIGLKYSISLDDFIFLNSMIWPNCTNLWLRASYCV). The segment covering 605–629 (SPITSSAPTSTTASSKTSSSAAQPT) has biased composition (low complexity). Residues 605–637 (SPITSSAPTSTTASSKTSSSAAQPTNVSTDGTC) are disordered. N630 carries N-linked (GlcNAc...) asparagine glycosylation. Chitin-binding type-1 domains follow at residues 634-680 (DGTC…KCDA) and 688-733 (DGTC…GVCT). 8 disulfide bridges follow: C637–C654, C645–C660, C653–C667, C671–C678, C691–C708, C699–C714, C707–C721, and C725–C732.

The protein belongs to the secreted LysM effector family.

Its subcellular location is the secreted. The protein localises to the cell membrane. It is found in the vacuole. In terms of biological role, secreted effector that enables the plant pathogenic fungus to manipulate host defenses for successful infection. Not involved in host recognition and penetration but suppresses host cell death and promotes fumonisin biosynthesis while the pathogen colonizes maize kernels. The sequence is that of Non-secreted LysM effector LCP1 from Gibberella moniliformis (strain M3125 / FGSC 7600) (Maize ear and stalk rot fungus).